Reading from the N-terminus, the 196-residue chain is Rho-related protein racA (196 aa).

GTP is bound by residues alanine 13, glycine 15, lysine 16, threonine 17, cysteine 18, tyrosine 32, threonine 35, glycine 60, lysine 116, aspartate 118, and alanine 159. Threonine 17 lines the Mg(2+) pocket. 2 consecutive short sequence motifs (switch) follow at residues 26 to 37 (NAFPNEYIPTVF) and 57 to 75 (DTAG…YPQT). Threonine 35 serves as a coordination point for Mg(2+). The residue at position 193 (cysteine 193) is a Cysteine methyl ester. Residue cysteine 193 is the site of S-geranylgeranyl cysteine attachment. Positions 194–196 (LLF) are cleaved as a propeptide — removed in mature form.

This sequence belongs to the small GTPase superfamily. Rho family. In terms of assembly, interacts (GTP-bound form) with PAK2 (via CRIB domain). Mg(2+) serves as cofactor.

The protein resides in the cell membrane. It is found in the cytoplasm. The protein localises to the cytoskeleton. It catalyses the reaction GTP + H2O = GDP + phosphate + H(+). With respect to regulation, regulated by guanine nucleotide exchange factors (GEFs) which promote the exchange of bound GDP for free GTP, GTPase activating proteins (GAPs) which increase the GTP hydrolysis activity, and GDP dissociation inhibitors which inhibit the dissociation of the nucleotide from the GTPase. Functionally, small GTPase which cycles between active GTP-bound and inactive GDP-bound states. Involved in cytoskeleton remodeling. Plays a role in phagocytosis of bacteria and host erythrocytes. Involved in capping of surface receptors. May be involved in cytokinesis. In Entamoeba histolytica (strain ATCC 30459 / HM-1:IMSS / ABRM), this protein is Rho-related protein racA.